A 166-amino-acid chain; its full sequence is Phosphopantetheine adenylyltransferase (166 aa).

Residue serine 8 coordinates substrate. Residues 8-9 (SF) and histidine 16 each bind ATP. Positions 40, 72, and 86 each coordinate substrate. Residues 87-89 (GLR), glutamate 97, and 122-128 (YSFLSSS) contribute to the ATP site.

Belongs to the bacterial CoaD family. In terms of assembly, homohexamer. It depends on Mg(2+) as a cofactor.

Its subcellular location is the cytoplasm. The catalysed reaction is (R)-4'-phosphopantetheine + ATP + H(+) = 3'-dephospho-CoA + diphosphate. The protein operates within cofactor biosynthesis; coenzyme A biosynthesis; CoA from (R)-pantothenate: step 4/5. In terms of biological role, reversibly transfers an adenylyl group from ATP to 4'-phosphopantetheine, yielding dephospho-CoA (dPCoA) and pyrophosphate. This Synechococcus elongatus (strain ATCC 33912 / PCC 7942 / FACHB-805) (Anacystis nidulans R2) protein is Phosphopantetheine adenylyltransferase.